We begin with the raw amino-acid sequence, 329 residues long: Prostaglandin reductase 1 (329 aa).

Thr18 is subject to Phosphothreonine. Ser20 bears the Phosphoserine mark. NADP(+)-binding positions include 152–155, Lys178, Tyr193, Asn217, 239–245, 270–272, and Asn321; these read GAVG, CGAISVY, and FVV. Lys178 carries the post-translational modification N6-(2-hydroxyisobutyryl)lysine; alternate. Lys178 carries the post-translational modification N6-acetyllysine; alternate.

It belongs to the NADP-dependent oxidoreductase L4BD family. As to quaternary structure, monomer or homodimer.

It is found in the cytoplasm. It carries out the reaction 13,14-dihydro-15-oxo-prostaglandin E1 + NADP(+) = 15-oxoprostaglandin E1 + NADPH + H(+). The catalysed reaction is 13,14-dihydro-15-oxo-prostaglandin E2 + NADP(+) = 15-oxoprostaglandin E2 + NADPH + H(+). It catalyses the reaction 13,14-dihydro-15-oxo-prostaglandin F1alpha + NADP(+) = 15-oxoprostaglandin F1alpha + NADPH + H(+). The enzyme catalyses 13,14-dihydro-15-oxo-PGF2alpha + NADP(+) = 15-oxoprostaglandin F2alpha + NADPH + H(+). It carries out the reaction leukotriene B4 + NADP(+) = 12-oxo-leukotriene B4 + NADPH + H(+). The catalysed reaction is 20-hydroxy-leukotriene B4 + NADP(+) = 12-oxo-20-hydroxy-leukotriene B4 + NADPH + H(+). It catalyses the reaction 6-trans-leukotriene B4 + NADP(+) = 12-oxo-(5S)-hydroxy-(6E,8E,10E,14Z)-eicosatetraenoate + NADPH + H(+). The enzyme catalyses (5S,12S)-dihydroxy-(6E,10E,12E,14Z)-eicosatetraenoate + NADP(+) = 12-oxo-(5S)-hydroxy-(6E,8E,10E,14Z)-eicosatetraenoate + NADPH + H(+). It carries out the reaction an n-alkanal + NADP(+) = an alk-2-enal + NADPH + H(+). The catalysed reaction is hexanal + NADP(+) = (E)-hex-2-enal + NADPH + H(+). It catalyses the reaction octanal + NADP(+) = (2E)-octenal + NADPH + H(+). The enzyme catalyses decanal + NADP(+) = (2E)-decenal + NADPH + H(+). It carries out the reaction dodecanal + NADP(+) = (2E)-dodecenal + NADPH + H(+). The catalysed reaction is 4-hydroxynonanal + NADP(+) = (E)-4-hydroxynon-2-enal + NADPH + H(+). It catalyses the reaction pentan-2-one + NADP(+) = (E)-pent-3-en-2-one + NADPH + H(+). The enzyme catalyses nonan-2-one + NADP(+) = (3E)-nonen-2-one + NADPH + H(+). Functionally, NAD(P)H-dependent oxidoreductase involved in metabolic inactivation of pro- and anti-inflammatory eicosanoids: prostaglandins (PG), leukotrienes (LT) and lipoxins (LX). Catalyzes with high efficiency the reduction of the 13,14 double bond of 15-oxoPGs, including 15-oxo-PGE1, 15-oxo-PGE2, 15-oxo-PGF1-alpha and 15-oxo-PGF2-alpha. Catalyzes with lower efficiency the oxidation of the hydroxyl group at C12 of LTB4 and its derivatives, converting them into biologically less active 12-oxo-LTB4 metabolites. Reduces 15-oxo-LXA4 to 13,14 dihydro-15-oxo-LXA4, enhancing neutrophil recruitment at the inflammatory site. Plays a role in metabolic detoxification of alkenals and ketones. Reduces alpha,beta-unsaturated alkenals and ketones, particularly those with medium-chain length, showing highest affinity toward (2E)-decenal and (3E)-3-nonen-2-one. May inactivate 4-hydroxy-2-nonenal, a cytotoxic lipid constituent of oxidized low-density lipoprotein particles. This Bos taurus (Bovine) protein is Prostaglandin reductase 1 (PTGR1).